Reading from the N-terminus, the 258-residue chain is 1-(5-phosphoribosyl)-5-[(5-phosphoribosylamino)methylideneamino] imidazole-4-carboxamide isomerase 2 (258 aa).

Asp14 functions as the Proton acceptor in the catalytic mechanism. Catalysis depends on Asp140, which acts as the Proton donor.

The protein belongs to the HisA/HisF family.

The protein resides in the cytoplasm. It carries out the reaction 1-(5-phospho-beta-D-ribosyl)-5-[(5-phospho-beta-D-ribosylamino)methylideneamino]imidazole-4-carboxamide = 5-[(5-phospho-1-deoxy-D-ribulos-1-ylimino)methylamino]-1-(5-phospho-beta-D-ribosyl)imidazole-4-carboxamide. It functions in the pathway amino-acid biosynthesis; L-histidine biosynthesis; L-histidine from 5-phospho-alpha-D-ribose 1-diphosphate: step 4/9. The chain is 1-(5-phosphoribosyl)-5-[(5-phosphoribosylamino)methylideneamino] imidazole-4-carboxamide isomerase 2 (hisA2) from Photorhabdus laumondii subsp. laumondii (strain DSM 15139 / CIP 105565 / TT01) (Photorhabdus luminescens subsp. laumondii).